The primary structure comprises 304 residues: Recombination-associated protein RdgC (304 aa).

The protein belongs to the RdgC family.

The protein resides in the cytoplasm. The protein localises to the nucleoid. May be involved in recombination. The polypeptide is Recombination-associated protein RdgC (Shewanella baltica (strain OS185)).